We begin with the raw amino-acid sequence, 91 residues long: Putative septation protein SpoVG (91 aa).

It belongs to the SpoVG family.

Its function is as follows. Could be involved in septation. This Clostridium botulinum (strain Alaska E43 / Type E3) protein is Putative septation protein SpoVG.